A 705-amino-acid chain; its full sequence is Probable iron-sulfur-binding oxidoreductase FadF (705 aa).

The next 6 membrane-spanning stretches (helical) occupy residues 4-24, 71-91, 109-129, 146-166, 173-193, and 199-219; these read FLIA…YLFV, IIHV…IDFI, AFTF…GWAF, AGLV…GNGM, HGLS…SGVG, and VIFY…LVYV. 4Fe-4S ferredoxin-type domains follow at residues 268–298 and 360–391; these read QSQL…MLSP and GDVI…VDKI. The [4Fe-4S] cluster site is built by Cys277, Cys280, Cys283, Cys287, Cys371, Cys374, Cys377, and Cys381.

The cofactor is [4Fe-4S] cluster.

The protein localises to the cell membrane. This is Probable iron-sulfur-binding oxidoreductase FadF (fadF) from Bacillus subtilis (strain 168).